Reading from the N-terminus, the 219-residue chain is Ribose-5-phosphate isomerase A (219 aa).

Residues 28–31 (TGST), 81–84 (DGAD), and 94–97 (KGGG) each bind substrate. The active-site Proton acceptor is the glutamate 103. Lysine 121 serves as a coordination point for substrate.

This sequence belongs to the ribose 5-phosphate isomerase family. In terms of assembly, homodimer.

The catalysed reaction is aldehydo-D-ribose 5-phosphate = D-ribulose 5-phosphate. Its pathway is carbohydrate degradation; pentose phosphate pathway; D-ribose 5-phosphate from D-ribulose 5-phosphate (non-oxidative stage): step 1/1. Its function is as follows. Catalyzes the reversible conversion of ribose-5-phosphate to ribulose 5-phosphate. In Nitrosomonas europaea (strain ATCC 19718 / CIP 103999 / KCTC 2705 / NBRC 14298), this protein is Ribose-5-phosphate isomerase A.